Consider the following 173-residue polypeptide: Large ribosomal subunit protein uL10 (173 aa).

The protein belongs to the universal ribosomal protein uL10 family. In terms of assembly, part of the ribosomal stalk of the 50S ribosomal subunit. The N-terminus interacts with L11 and the large rRNA to form the base of the stalk. The C-terminus forms an elongated spine to which L12 dimers bind in a sequential fashion forming a multimeric L10(L12)X complex.

Its function is as follows. Forms part of the ribosomal stalk, playing a central role in the interaction of the ribosome with GTP-bound translation factors. The protein is Large ribosomal subunit protein uL10 of Thermus thermophilus (strain ATCC BAA-163 / DSM 7039 / HB27).